We begin with the raw amino-acid sequence, 219 residues long: Leukocyte surface antigen CD53 (219 aa).

Residues 1-11 (MGMSSLKLLKF) lie on the Cytoplasmic side of the membrane. The chain crosses the membrane as a helical span at residues 12–32 (VLFFFNLIFWFCGCCILGLGI). The Extracellular portion of the chain corresponds to 33-54 (YLLIHSKFGVLFHNLPSLTLGN). A helical transmembrane segment spans residues 55–69 (VLVIVGSVIMVVAFL). Residues 70–80 (GCMGSIKENKC) are Cytoplasmic-facing. Residues 81-106 (LLMSFFVLLLIILLAEVTLAILLFVY) form a helical membrane-spanning segment. Residues 107–181 (EQKLKEYVAE…IQAKQWFHSN (75 aa)) are Extracellular-facing. N-linked (GlcNAc...) asparagine glycosylation is found at Asn129 and Asn148. The chain crosses the membrane as a helical span at residues 182–206 (FLYIGITTICVCVIQVLGMSFALTL). The Cytoplasmic segment spans residues 207 to 219 (NCQIDKTSQVLGL).

Belongs to the tetraspanin (TM4SF) family. Interacts with SCIMP. Interacts with CD45/PTPRC. Interacts with IL7R. Interacts with RBL2 and PPP2CA.

The protein localises to the cell membrane. It is found in the cell junction. The protein resides in the membrane. Its subcellular location is the synapse. Functionally, structural component of specialized membrane microdomains known as tetraspanin-enriched microdomains (TERMs), which act as platforms for receptor clustering and signaling. Participates thereby in diverse biological functions such as cell signal transduction, adhesion, migration and protein trafficking. Plays a role in the activation of monocytes and B-cells. Acts as an essential regulator of B-cell development by promoting interleukin-7 receptor/IL7R signaling. Also promotes, in B-cells, the BCR signaling by recruiting PKC to the plasma membrane in order to phosphorylate its substrates. Plays an essential role in B- and T-cells homing to lymph nodes by stabilizing L-selectin/SELL cell surface expression. Also mediates metabolic and inflammatory functions in hepatocytes and adipose tissue by promoting TNF-alpha and LPS signaling independent of the immune compartment. The protein is Leukocyte surface antigen CD53 (CD53) of Bos taurus (Bovine).